The primary structure comprises 994 residues: Regulator of telomere elongation helicase 1 homolog (994 aa).

A Helicase ATP-binding domain is found at 7-316; sequence AGIPVHFPFE…DDLMLLKEML (310 aa). 42 to 49 is a binding site for ATP; that stretch reads SPTGTGKT. Cys-146, Cys-164, Cys-173, and Cys-209 together coordinate [4Fe-4S] cluster. A DEAH box motif is present at residues 252–255; the sequence is DEAH. The interval 861-887 is disordered; sequence SSGLVKIHKRERSSPPGSSQSSSQTAK. A compositionally biased stretch (low complexity) spans 874-884; sequence SPPGSSQSSSQ.

This sequence belongs to the helicase family. RAD3/XPD subfamily.

Its subcellular location is the nucleus. It catalyses the reaction ATP + H2O = ADP + phosphate + H(+). Functionally, a probable ATP-dependent DNA helicase implicated in DNA repair and the maintenance of genomic stability. Acts as an anti-recombinase to counteract toxic recombination and limit crossover during meiosis. Regulates meiotic recombination and crossover homeostasis by physically dissociating strand invasion events and thereby promotes noncrossover repair by meiotic synthesis dependent strand annealing (SDSA) as well as disassembly of D loop recombination intermediates. The sequence is that of Regulator of telomere elongation helicase 1 homolog from Drosophila ananassae (Fruit fly).